The chain runs to 49 residues: uncharacterized protein (49 aa).

Positions 1 to 49 (MSNETFEQNEPKPTKVEELQPGDVEAVEDSTPVREITQTDHINKAMLQI) are disordered. The span at 9-18 (NEPKPTKVEE) shows a compositional bias: basic and acidic residues.

This is an uncharacterized protein from Dictyostelium discoideum (Social amoeba).